The sequence spans 331 residues: 5-dehydro-2-deoxygluconokinase (331 aa).

Belongs to the carbohydrate kinase PfkB family.

The catalysed reaction is 5-dehydro-2-deoxy-D-gluconate + ATP = 6-phospho-5-dehydro-2-deoxy-D-gluconate + ADP + H(+). The protein operates within polyol metabolism; myo-inositol degradation into acetyl-CoA; acetyl-CoA from myo-inositol: step 5/7. Its function is as follows. Catalyzes the phosphorylation of 5-dehydro-2-deoxy-D-gluconate (2-deoxy-5-keto-D-gluconate or DKG) to 6-phospho-5-dehydro-2-deoxy-D-gluconate (DKGP). The sequence is that of 5-dehydro-2-deoxygluconokinase from Halalkalibacterium halodurans (strain ATCC BAA-125 / DSM 18197 / FERM 7344 / JCM 9153 / C-125) (Bacillus halodurans).